The following is a 456-amino-acid chain: Taurine--pyruvate aminotransferase (456 aa).

At Lys280 the chain carries N6-(pyridoxal phosphate)lysine.

The protein belongs to the class-III pyridoxal-phosphate-dependent aminotransferase family. As to quaternary structure, homotetramer. Pyridoxal 5'-phosphate serves as cofactor.

It carries out the reaction taurine + pyruvate = sulfoacetaldehyde + L-alanine. Its pathway is organosulfur degradation; alkanesulfonate degradation. In terms of biological role, involved in an anaerobic respiration pathway that converts the sulfonate taurine (2-aminoethanesulfonate) to ammonia, acetate and sulfide. Catalyzes the initial metabolic reaction of anaerobic taurine degradation, i.e. the transamination reaction between taurine and pyruvate leading to sulfoacetaldehyde and alanine. This is Taurine--pyruvate aminotransferase from Bilophila wadsworthia (strain 3_1_6).